The chain runs to 66 residues: Defensin-B1 (66 aa).

The first 23 residues, 1–23, serve as a signal peptide directing secretion; that stretch reads MNAHVLLLCTILFLLVHTPPVLG. 3 disulfides stabilise this stretch: cysteine 29-cysteine 56, cysteine 36-cysteine 50, and cysteine 40-cysteine 57. A propeptide spanning residues 61–66 is cleaved from the precursor; it reads VLMEDG.

It belongs to the beta-defensin family. Expressed at low levels in kidney, lung, and spleen.

Its subcellular location is the secreted. Has bactericidal activity. May act as a ligand for C-C chemokine receptor CCR6. Positively regulates the sperm motility and bactericidal activity in a CCR6-dependent manner. Binds to CCR6 and triggers Ca2+ mobilization in the sperm which is important for its motility. In Ornithorhynchus anatinus (Duckbill platypus), this protein is Defensin-B1.